Consider the following 768-residue polypeptide: ATP-dependent RNA helicase DBP4 (768 aa).

The Q motif motif lies at 41 to 69 (VFFKDLPISNSTLKGLNDSAFLKLTDIQR). Positions 72–246 (IPMSLKGYDI…RLSLTDYKTI (175 aa)) constitute a Helicase ATP-binding domain. Residue 85–92 (AKTGSGKT) participates in ATP binding. The DEAD box motif lies at 194–197 (DEAD). In terms of domain architecture, Helicase C-terminal spans 280 to 439 (KLDMLYSFIK…SIKPQLQSLL (160 aa)). Disordered regions lie at residues 581-612 (EEELPQLSLPSSRRAQKRALSKKASLSTKGNA) and 653-754 (KDVM…EPQT). The span at 653–666 (KDVMNEVDVEDKQV) shows a compositional bias: basic and acidic residues. Positions 667 to 678 (AKQKKQEKKRKR) are enriched in basic residues. The span at 711-721 (DMQDPDSDDEE) shows a compositional bias: acidic residues.

Belongs to the DEAD box helicase family. DDX10/DBP4 subfamily. As to quaternary structure, interacts with the U3 and U14 snoRNAs. Associates with pre-ribosomal complexes.

Its subcellular location is the nucleus. It is found in the nucleolus. It carries out the reaction ATP + H2O = ADP + phosphate + H(+). Its function is as follows. ATP-dependent RNA helicase required for ribosome biogenesis. Involved in the release of U14 snoRNA in pre-ribosomal complexes. Required for pre-rRNA cleavage at site A2. The chain is ATP-dependent RNA helicase DBP4 (DBP4) from Vanderwaltozyma polyspora (strain ATCC 22028 / DSM 70294 / BCRC 21397 / CBS 2163 / NBRC 10782 / NRRL Y-8283 / UCD 57-17) (Kluyveromyces polysporus).